Consider the following 353-residue polypeptide: Photosystem II protein D1 (353 aa).

An N-acetylthreonine modification is found at Thr-2. Thr-2 carries the post-translational modification Phosphothreonine. The next 3 membrane-spanning stretches (helical) occupy residues Tyr-29 to Ser-46, His-118 to Leu-133, and Trp-142 to Ala-156. A chlorophyll a-binding site is contributed by His-118. Tyr-126 is a pheophytin a binding site. The [CaMn4O5] cluster site is built by Asp-170 and Glu-189. The helical transmembrane segment at Phe-197 to Leu-218 threads the bilayer. His-198 contributes to the chlorophyll a binding site. Residues His-215 and Ser-264 to Phe-265 contribute to the a quinone site. His-215 contacts Fe cation. His-272 contributes to the Fe cation binding site. A helical membrane pass occupies residues Phe-274–Leu-288. [CaMn4O5] cluster contacts are provided by His-332, Glu-333, Asp-342, and Ala-344. Residues Ala-345–Gly-353 constitute a propeptide that is removed on maturation.

This sequence belongs to the reaction center PufL/M/PsbA/D family. As to quaternary structure, PSII is composed of 1 copy each of membrane proteins PsbA, PsbB, PsbC, PsbD, PsbE, PsbF, PsbH, PsbI, PsbJ, PsbK, PsbL, PsbM, PsbT, PsbX, PsbY, PsbZ, Psb30/Ycf12, at least 3 peripheral proteins of the oxygen-evolving complex and a large number of cofactors. It forms dimeric complexes. It depends on The D1/D2 heterodimer binds P680, chlorophylls that are the primary electron donor of PSII, and subsequent electron acceptors. It shares a non-heme iron and each subunit binds pheophytin, quinone, additional chlorophylls, carotenoids and lipids. D1 provides most of the ligands for the Mn4-Ca-O5 cluster of the oxygen-evolving complex (OEC). There is also a Cl(-1) ion associated with D1 and D2, which is required for oxygen evolution. The PSII complex binds additional chlorophylls, carotenoids and specific lipids. as a cofactor. In terms of processing, tyr-161 forms a radical intermediate that is referred to as redox-active TyrZ, YZ or Y-Z. C-terminally processed by CTPA; processing is essential to allow assembly of the oxygen-evolving complex and thus photosynthetic growth.

The protein resides in the plastid membrane. The enzyme catalyses 2 a plastoquinone + 4 hnu + 2 H2O = 2 a plastoquinol + O2. Photosystem II (PSII) is a light-driven water:plastoquinone oxidoreductase that uses light energy to abstract electrons from H(2)O, generating O(2) and a proton gradient subsequently used for ATP formation. It consists of a core antenna complex that captures photons, and an electron transfer chain that converts photonic excitation into a charge separation. The D1/D2 (PsbA/PsbD) reaction center heterodimer binds P680, the primary electron donor of PSII as well as several subsequent electron acceptors. The polypeptide is Photosystem II protein D1 (Cuscuta reflexa (Southern Asian dodder)).